The sequence spans 62 residues: Synergistic-type venom protein S2C4 (62 aa).

3 disulfide bridges follow: Cys3/Cys24, Cys17/Cys42, and Cys46/Cys57.

Belongs to the three-finger toxin family. Short-chain subfamily. Aminergic toxin sub-subfamily. As to quaternary structure, homodimer; disulfide-linked. Expressed by the venom gland.

The protein resides in the secreted. Its function is as follows. This protein shows a synergetic toxic effect in that it enhances the toxicity of other toxins. The sequence is that of Synergistic-type venom protein S2C4 from Dendroaspis jamesoni kaimosae (Eastern Jameson's mamba).